The chain runs to 197 residues: Rac-like GTP-binding protein RAC1 (197 aa).

GTP is bound at residue 13–20 (GDGAVGKT). Residues 35–43 (YVPTVFDNF) carry the Effector region motif. GTP contacts are provided by residues 60–64 (DTAGQ) and 118–121 (TKLD). Cys194 carries the cysteine methyl ester modification. Cys194 carries the S-geranylgeranyl cysteine lipid modification. Residues 195–197 (SIL) constitute a propeptide, removed in mature form.

This sequence belongs to the small GTPase superfamily. Rho family.

The protein resides in the cytoplasm. It localises to the membrane. In terms of biological role, inactive GDP-bound Rho GTPases reside in the cytosol, are found in a complex with Rho GDP-dissociation inhibitors (Rho GDIs), and are released from the GDI protein in order to translocate to membranes upon activation. This is Rac-like GTP-binding protein RAC1 (RAC1) from Lotus japonicus (Lotus corniculatus var. japonicus).